Here is a 345-residue protein sequence, read N- to C-terminus: uncharacterized protein (345 aa).

The protein belongs to the methyltransferase superfamily.

This is an uncharacterized protein from Streptomyces fradiae (Streptomyces roseoflavus).